We begin with the raw amino-acid sequence, 1289 residues long: Pesticidal crystal protein Cry5Ab (1289 aa).

The interval 1263–1289 is disordered; it reads PLPTDDQNSEGNTASSTNSDTSMNNNQ. Low complexity predominate over residues 1274–1289; sequence NTASSTNSDTSMNNNQ.

The protein belongs to the delta endotoxin family.

Its function is as follows. Endotoxin with nematicidal activity. The protein is Pesticidal crystal protein Cry5Ab (cry5Ab) of Bacillus thuringiensis subsp. darmstadiensis.